The primary structure comprises 197 residues: Phospholipid hydroperoxide glutathione peroxidase (197 aa).

The residue at position 40 (Ser-40) is a Phosphoserine. Sec-73 is an active-site residue. Sec-73 is a non-standard amino acid (selenocysteine).

Belongs to the glutathione peroxidase family. Monomer. Has a tendency to form higher mass oligomers. Interacts with FUNDC1; this interaction promotes GPX4 recruitment into mitochondria through TOM/TIM complex where it is degraded by mitophagy.

The protein resides in the mitochondrion. It is found in the cytoplasm. It catalyses the reaction a hydroperoxy polyunsaturated fatty acid + 2 glutathione = a hydroxy polyunsaturated fatty acid + glutathione disulfide + H2O. It carries out the reaction 2 glutathione + H2O2 = glutathione disulfide + 2 H2O. The enzyme catalyses tert-butyl hydroperoxide + 2 glutathione = tert-butanol + glutathione disulfide + H2O. The catalysed reaction is cumene hydroperoxide + 2 glutathione = 2-phenylpropan-2-ol + glutathione disulfide + H2O. It catalyses the reaction (9S)-hydroperoxy-(10E,12Z)-octadecadienoate + 2 glutathione = (9S)-hydroxy-(10E,12Z)-octadecadienoate + glutathione disulfide + H2O. It carries out the reaction (13S)-hydroperoxy-(9Z,11E)-octadecadienoate + 2 glutathione = (13S)-hydroxy-(9Z,11E)-octadecadienoate + glutathione disulfide + H2O. The enzyme catalyses (5S)-hydroperoxy-(6E,8Z,11Z,14Z)-eicosatetraenoate + 2 glutathione = (5S)-hydroxy-(6E,8Z,11Z,14Z)-eicosatetraenoate + glutathione disulfide + H2O. The catalysed reaction is (12R)-hydroperoxy-(5Z,8Z,10E,14Z)-eicosatetraenoate + 2 glutathione = (12R)-hydroxy-(5Z,8Z,10E,14Z)-eicosatetraenoate + glutathione disulfide + H2O. It catalyses the reaction (12S)-hydroperoxy-(5Z,8Z,10E,14Z)-eicosatetraenoate + 2 glutathione = (12S)-hydroxy-(5Z,8Z,10E,14Z)-eicosatetraenoate + glutathione disulfide + H2O. It carries out the reaction (15S)-hydroperoxy-(5Z,8Z,11Z,13E)-eicosatetraenoate + 2 glutathione = (15S)-hydroxy-(5Z,8Z,11Z,13E)-eicosatetraenoate + glutathione disulfide + H2O. The enzyme catalyses (5S)-hydroperoxy-(6E,8Z,11Z,14Z,17Z)-eicosapentaenoate + 2 glutathione = (5S)-hydroxy-(6E,8Z,11Z,14Z,17Z)-eicosapentaenoate + glutathione disulfide + H2O. The catalysed reaction is (12S)-hydroperoxy-(5Z,8Z,10E,14Z,17Z)-eicosapentaenoate + 2 glutathione = (12S)-hydroxy-(5Z,8Z,10E,14Z,17Z)-eicosapentaenoate + glutathione disulfide + H2O. It catalyses the reaction (15S)-hydroperoxy-(5Z,8Z,11Z,13E,17Z)-eicosapentaenoate + 2 glutathione = (15S)-hydroxy-(5Z,8Z,11Z,13E,17Z)-eicosapentaenoate + glutathione disulfide + H2O. It carries out the reaction (15S)-hydroperoxy-(11Z,13E)-eicosadienoate + 2 glutathione = (15S)-hydroxy-(11Z,13E)-eicosadienoate + glutathione disulfide + H2O. The enzyme catalyses (17S)-hydroperoxy-(4Z,7Z,10Z,13Z,15E,19Z)-docosahexaenoate + 2 glutathione = (17S)-hydroxy-(4Z,7Z,10Z,13Z,15E,19Z)-docosahexaenoate + glutathione disulfide + H2O. The catalysed reaction is a hydroperoxy-1,2-diacyl-glycero-3-phosphocholine + 2 glutathione = a hydroxy-1,2-diacyl-glycero-3-phosphocholine + glutathione disulfide + H2O. In terms of biological role, essential antioxidant peroxidase that directly reduces phospholipid hydroperoxide even if they are incorporated in membranes and lipoproteins. Can also reduce fatty acid hydroperoxide, cholesterol hydroperoxide and thymine hydroperoxide. Plays a key role in protecting cells from oxidative damage by preventing membrane lipid peroxidation. Required to prevent cells from ferroptosis, a non-apoptotic cell death resulting from an iron-dependent accumulation of lipid reactive oxygen species. The presence of selenocysteine (Sec) versus Cys at the active site is essential for life: it provides resistance to overoxidation and prevents cells against ferroptosis. The presence of Sec at the active site is also essential for the survival of a specific type of parvalbumin-positive interneurons, thereby preventing against fatal epileptic seizures. May be required to protect cells from the toxicity of ingested lipid hydroperoxides. Required for normal sperm development and male fertility. Essential for maturation and survival of photoreceptor cells. Plays a role in a primary T-cell response to viral and parasitic infection by protecting T-cells from ferroptosis and by supporting T-cell expansion. Plays a role of glutathione peroxidase in platelets in the arachidonic acid metabolism. Reduces hydroperoxy ester lipids formed by a 15-lipoxygenase that may play a role as down-regulator of the cellular 15-lipoxygenase pathway. Can also reduce small soluble hydroperoxides such as H2O2, cumene hydroperoxide and tert-butyl hydroperoxide. This is Phospholipid hydroperoxide glutathione peroxidase from Pongo pygmaeus (Bornean orangutan).